The sequence spans 280 residues: Manganese transport system membrane protein MntC (280 aa).

9 consecutive transmembrane segments (helical) span residues Ala16–Leu36, Leu41–Gly61, Met62–Val82, Thr92–Ala112, Thr137–Val157, Tyr168–Val188, Thr193–Leu213, Ile221–Ile241, and Leu244–Phe264.

This sequence belongs to the ABC-3 integral membrane protein family.

The protein resides in the cell membrane. In terms of biological role, this protein is probably a component of a manganese permease, a binding protein-dependent, ATP-driven transport system. The protein is Manganese transport system membrane protein MntC (mntC) of Listeria innocua serovar 6a (strain ATCC BAA-680 / CLIP 11262).